A 138-amino-acid polypeptide reads, in one-letter code: Small ribosomal subunit protein uS11 (138 aa).

Belongs to the universal ribosomal protein uS11 family. Part of the 30S ribosomal subunit.

Functionally, located on the platform of the 30S subunit. In Pyrobaculum arsenaticum (strain DSM 13514 / JCM 11321 / PZ6), this protein is Small ribosomal subunit protein uS11.